A 135-amino-acid polypeptide reads, in one-letter code: MSSIGGKLQKSLHKIRAGALGIPLPKHIQEVSIQYSLDSRLGHMGAKKFVKECLPSLYYNNYGLKFNVNHRLPNDQTPTFSIISNNKVIYSYDMRSKQLETISSDIQKALKELHHESSPENIKEAHKQDYSPPSN.

Residues 114–129 (HHESSPENIKEAHKQD) show a composition bias toward basic and acidic residues. Residues 114-135 (HHESSPENIKEAHKQDYSPPSN) form a disordered region.

This sequence belongs to the mitochondrion-specific ribosomal protein mL61 family. As to quaternary structure, component of the mitochondrial large ribosomal subunit (mt-LSU). Mature yeast 74S mitochondrial ribosomes consist of a small (37S) and a large (54S) subunit. The 37S small subunit contains a 15S ribosomal RNA (15S mt-rRNA) and at least 32 different proteins. The 54S large subunit contains a 21S rRNA (21S mt-rRNA) and at least 45 different proteins.

The protein localises to the mitochondrion. Component of the mitochondrial ribosome (mitoribosome), a dedicated translation machinery responsible for the synthesis of mitochondrial genome-encoded proteins, including at least some of the essential transmembrane subunits of the mitochondrial respiratory chain. The mitoribosomes are attached to the mitochondrial inner membrane and translation products are cotranslationally integrated into the membrane. mL61 is not essential in cells grown at 30 degrees Celsius but is required for mitochondrial translation in cells grown at 18 degrees Celsius. This is Large ribosomal subunit protein mL61 (mrp49) from Schizosaccharomyces pombe (strain 972 / ATCC 24843) (Fission yeast).